We begin with the raw amino-acid sequence, 777 residues long: MLTNLRIFAMSHQTIPSVCINNICCYKIRASLKRLKPHVPLGRNCSSLPGLIGNDIKSLHSIINPPIAKIRNIGIMAHIDAGKTTTTERILYYSGYTRSLGDVDDGDTVTDFMAQERERGITIQSAAVTFDWKGYRVNLIDTPGHVDFTLEVERCLRVLDGAVAVFDASAGVEAQTLTVWRQADKHNIPRICFLNKMDKTGASFKYAVESIREKLKAKPLLLQLPIGEAKTFKGVVDVVTKEKLLWNCNSNDGKDFERKPLLEMNDPELLKETTEARNALIEQVADLDDEFADLVLEEFSENFDLLPAEKLQTAIHRVTLAQTAVPVLCGSALKNKGIQPLLDAVTMYLPSPEECNCEFLQWYKDDLCALAFKVLHDKQRGPLVFMRIYSGTIKPQLAIHNINGNCTERISRLLLPFADQHVEIPSLTAGNIALTVGLKHTATGDTIVSSKSSALAAARRAEREGEKKHRQNSEAERLVLAGVEIPEPVFFCTIEPPSVSKQPDLEHALKCLQREDPSLKVRLDPDSGQTVLCGMGELHIEIIHDRIKREYGLEAYLGPLQVAYRETILNSVRATDTLDRTLGDKRHLVTVEVEARPTETTSVMPVIEYAESIHEGLLKVSQEAIENGIYSACLQGPLLGSPIQDVAITLHSLTIHPGTSTTMISACVSRCVQKALKKADKQVLEPLMNLEVTVARDYLSPVLADLAQRRGNIQEIQTRQDNKVVIGFVPLAEIMGYSTVLRTLTSGSATFALELSTNQAMNPQDQNTLLNRRSGLT.

Residues 68 to 353 form the tr-type G domain; that stretch reads AKIRNIGIMA…AVTMYLPSPE (286 aa). GTP is bound by residues 77-84, 141-145, and 195-198; these read AHIDAGKT, DTPGH, and NKMD.

The protein belongs to the TRAFAC class translation factor GTPase superfamily. Classic translation factor GTPase family. EF-G/EF-2 subfamily.

It localises to the mitochondrion. It carries out the reaction GTP + H2O = GDP + phosphate + H(+). Mitochondrial GTPase that mediates the disassembly of ribosomes from messenger RNA at the termination of mitochondrial protein biosynthesis. Acts in collaboration with MRRF. GTP hydrolysis follows the ribosome disassembly and probably occurs on the ribosome large subunit. Not involved in the GTP-dependent ribosomal translocation step during translation elongation. In Pongo abelii (Sumatran orangutan), this protein is Ribosome-releasing factor 2, mitochondrial.